The chain runs to 200 residues: ATP-dependent Clp protease proteolytic subunit (200 aa).

The Nucleophile role is filled by Ser-99. His-124 is an active-site residue.

Belongs to the peptidase S14 family. Fourteen ClpP subunits assemble into 2 heptameric rings which stack back to back to give a disk-like structure with a central cavity, resembling the structure of eukaryotic proteasomes.

The protein resides in the cytoplasm. The enzyme catalyses Hydrolysis of proteins to small peptides in the presence of ATP and magnesium. alpha-casein is the usual test substrate. In the absence of ATP, only oligopeptides shorter than five residues are hydrolyzed (such as succinyl-Leu-Tyr-|-NHMec, and Leu-Tyr-Leu-|-Tyr-Trp, in which cleavage of the -Tyr-|-Leu- and -Tyr-|-Trp bonds also occurs).. Cleaves peptides in various proteins in a process that requires ATP hydrolysis. Has a chymotrypsin-like activity. Plays a major role in the degradation of misfolded proteins. The chain is ATP-dependent Clp protease proteolytic subunit from Syntrophomonas wolfei subsp. wolfei (strain DSM 2245B / Goettingen).